The primary structure comprises 186 residues: Transcription factor FapR (186 aa).

The protein belongs to the FapR family.

In terms of biological role, transcriptional factor involved in regulation of membrane lipid biosynthesis by repressing genes involved in fatty acid and phospholipid metabolism. The chain is Transcription factor FapR from Halalkalibacterium halodurans (strain ATCC BAA-125 / DSM 18197 / FERM 7344 / JCM 9153 / C-125) (Bacillus halodurans).